We begin with the raw amino-acid sequence, 449 residues long: Glucose-6-phosphate isomerase (449 aa).

The active-site Proton donor is glutamate 291. Catalysis depends on residues histidine 312 and lysine 426.

This sequence belongs to the GPI family.

The protein resides in the cytoplasm. It carries out the reaction alpha-D-glucose 6-phosphate = beta-D-fructose 6-phosphate. The protein operates within carbohydrate biosynthesis; gluconeogenesis. It participates in carbohydrate degradation; glycolysis; D-glyceraldehyde 3-phosphate and glycerone phosphate from D-glucose: step 2/4. Functionally, catalyzes the reversible isomerization of glucose-6-phosphate to fructose-6-phosphate. The sequence is that of Glucose-6-phosphate isomerase from Streptococcus pyogenes serotype M12 (strain MGAS2096).